Here is a 642-residue protein sequence, read N- to C-terminus: Bifunctional protein glk (642 aa).

The segment at 1–340 is glucokinase; that stretch reads MSTGAQSKAA…QLSNRSGGAS (340 aa). 23-28 serves as a coordination point for ATP; the sequence is ADVGGT. Residues 341–417 enclose the HTH rpiR-type domain; sequence SAVFERIRQM…LKLATGLTGT (77 aa). The segment at 341 to 642 is putative HTH-type transcriptional regulator; that stretch reads SAVFERIRQM…SPAAKDVARD (302 aa). Residues 377 to 396 constitute a DNA-binding region (H-T-H motif); sequence IVDIARKADVSQPTVIRFCR. Positions 461–600 constitute an SIS domain; that stretch reads AIEILNGARR…AVGVAIRRAS (140 aa). Residues 576–596 form a helical membrane-spanning segment; that stretch reads SMISRILHLLMIDILAVGVAI.

The protein in the N-terminal section; belongs to the bacterial glucokinase family.

It localises to the membrane. The enzyme catalyses D-glucose + ATP = D-glucose 6-phosphate + ADP + H(+). This is Bifunctional protein glk (glk) from Burkholderia lata (strain ATCC 17760 / DSM 23089 / LMG 22485 / NCIMB 9086 / R18194 / 383).